A 362-amino-acid chain; its full sequence is Outer membrane porin protein OmpD (362 aa).

Residues 1-21 form the signal peptide; it reads MKLKLVAVAVTSLLAAGVVNA.

It belongs to the Gram-negative porin family. In terms of assembly, homotrimer.

The protein localises to the cell outer membrane. In terms of biological role, forms pores that allow passive diffusion of small molecules across the outer membrane. The protein is Outer membrane porin protein OmpD (ompD) of Salmonella choleraesuis (strain SC-B67).